The sequence spans 259 residues: Global transcriptional regulator CodY (259 aa).

Positions 1–155 are GAF domain; sequence MELLAKTRKL…SSTVVGMEIL (155 aa). The segment at residues 203–222 is a DNA-binding region (H-T-H motif); it reads ASKIADRVGITRSVIVNALR. The residue at position 215 (S215) is a Phosphoserine.

This sequence belongs to the CodY family.

It localises to the cytoplasm. DNA-binding global transcriptional regulator which is involved in the adaptive response to starvation and acts by directly or indirectly controlling the expression of numerous genes in response to nutrient availability. During rapid exponential growth, CodY is highly active and represses genes whose products allow adaptation to nutrient depletion. This Bacillus anthracis (strain A0248) protein is Global transcriptional regulator CodY.